The following is a 280-amino-acid chain: Polyamine aminopropyltransferase (280 aa).

Positions 3-237 (DVYFMERDPY…YWWSFSVGSK (235 aa)) constitute a PABS domain. Residue Q33 participates in S-methyl-5'-thioadenosine binding. Spermidine-binding residues include H64 and D88. S-methyl-5'-thioadenosine contacts are provided by residues D108 and 139–140 (DG). The active-site Proton acceptor is D157. 157-160 (DSTD) contacts spermidine.

Belongs to the spermidine/spermine synthase family. In terms of assembly, homodimer or homotetramer.

It localises to the cytoplasm. It carries out the reaction S-adenosyl 3-(methylsulfanyl)propylamine + putrescine = S-methyl-5'-thioadenosine + spermidine + H(+). Its pathway is amine and polyamine biosynthesis; spermidine biosynthesis; spermidine from putrescine: step 1/1. Functionally, catalyzes the irreversible transfer of a propylamine group from the amino donor S-adenosylmethioninamine (decarboxy-AdoMet) to putrescine (1,4-diaminobutane) to yield spermidine. The sequence is that of Polyamine aminopropyltransferase from Hydrogenobaculum sp. (strain Y04AAS1).